Consider the following 563-residue polypeptide: Cytidine monophosphate-N-acetylneuraminic acid hydroxylase (563 aa).

The Rieske domain occupies 10 to 108; it reads LSPAETANLK…VEMDGNDGLF (99 aa). [2Fe-2S] cluster contacts are provided by cysteine 50, histidine 52, cysteine 71, and histidine 74.

Belongs to the CMP-Neu5Ac hydroxylase family. It depends on [2Fe-2S] cluster as a cofactor.

It is found in the cytoplasm. The catalysed reaction is CMP-N-acetyl-beta-neuraminate + 2 Fe(II)-[cytochrome b5] + O2 + 2 H(+) = CMP-N-glycoloyl-beta-neuraminate + 2 Fe(III)-[cytochrome b5] + H2O. Its pathway is amino-sugar metabolism; N-acetylneuraminate metabolism. Sialic acids are components of carbohydrate chains of glycoconjugates and are involved in cell-cell recognition and cell-pathogen interactions. Catalyzes the conversion of CMP-N-acetylneuraminic acid (CMP-Neu5Ac) into its hydroxylated derivative CMP-N-glycolylneuraminic acid (CMP-Neu5Gc), a sialic acid abundantly expressed at the surface of many cells. This chain is Cytidine monophosphate-N-acetylneuraminic acid hydroxylase (CMAH), found in Cricetulus griseus (Chinese hamster).